The following is a 139-amino-acid chain: uncharacterized protein (139 aa).

A Globin domain is found at 1–133 (MLSEETIRVI…LAKTLITLEK (133 aa)).

It belongs to the globin family.

This is an uncharacterized protein from Aquifex aeolicus (strain VF5).